Here is an 89-residue protein sequence, read N- to C-terminus: Small ribosomal subunit protein uS19 (89 aa).

Belongs to the universal ribosomal protein uS19 family.

Its function is as follows. Protein S19 forms a complex with S13 that binds strongly to the 16S ribosomal RNA. In Xylella fastidiosa (strain M12), this protein is Small ribosomal subunit protein uS19.